The chain runs to 396 residues: G-protein coupled receptor 84 (396 aa).

Over 1-26 (MWNSSDANFSCYHESVLGYRYVAVSW) the chain is Extracellular. 2 N-linked (GlcNAc...) asparagine glycosylation sites follow: N3 and N8. A helical transmembrane segment spans residues 27–47 (GVVVAVTGTVGNVLTLLALAI). Residues 48-57 (QPKLRTRFNL) are Cytoplasmic-facing. Residues 58–78 (LIANLTLADLLYCTLLQPFSV) form a helical membrane-spanning segment. Residues 79–94 (DTYLHLHWRTGATFCR) are Extracellular-facing. A helical transmembrane segment spans residues 95 to 115 (VFGLLLFASNSVSILTLCLIA). Residues 116–144 (LGRYLLIAHPKLFPQVFSAKGIVLALVST) lie on the Cytoplasmic side of the membrane. A helical membrane pass occupies residues 145 to 165 (WVVGVASFAPLWPIYILVPVV). At 166–180 (CTCSFDRIRGRPYTT) the chain is on the extracellular side. Residues 181-201 (ILMGIYFVLGLSSVGIFYCLI) form a helical membrane-spanning segment. The Cytoplasmic segment spans residues 202-320 (HRQVKRAAQA…SSEFGKVTRM (119 aa)). Residues S221 and S224 each carry the phosphoserine modification. The segment at 244-311 (RLASGGPSEG…KGARRAPDSS (68 aa)) is disordered. The span at 247–260 (SGGPSEGISSEPVS) shows a compositional bias: low complexity. Phosphothreonine occurs at positions 263 and 264. A helical transmembrane segment spans residues 321–341 (CFAVFLCFALSYIPFLLLNIL). At 342–352 (DARVQAPRVVH) the chain is on the extracellular side. A helical membrane pass occupies residues 353–373 (MLAANLTWLNGCINPVLYAAM). The Cytoplasmic segment spans residues 374–396 (NRQFRQAYGSILKRGPRSFHRLH).

It belongs to the G-protein coupled receptor 1 family. Interacts with ARRB2 and ARR3. In terms of processing, phosphorylated by a subset of GPR84-activating ligands. Constitutively phosphorylated at Ser-221 and Ser-224 in the absence of 2-HTP. By contrast, Thr-263 and Thr-264 are phosphorylated only following prior cell treatment with 2-HTP. As to expression, expressed predominantly in hematopoietic tissues. High levels detected in the bone marrow and lower levels in the peripheral leukocytes and lung. Also expressed in brain, heart, muscle, colon, thymus, spleen, kidney, liver, placenta and intestine. Within the leukocyte population expression is higher in neutrophils and eosinophils relative to T- or B-lymphocytes.

It is found in the cell membrane. Its function is as follows. G protein-coupled receptor that responds endogenously to dietary fatty acids or nutrient, specifically medium-chain free fatty acid (FFA) with carbon chain lengths of C9 to C14. Capric acid (C10:0), undecanoic acid (C11:0) and lauric acid (C12:0) are the most potent agonists. In immune cells, functions as a pro-inflammatory receptor via 6-OAU and promotes the expression of pro-inflammatory mediators such as TNFalpha, IL-6 and IL-12B as well as stimulating chemotactic responses through activation of signaling mediators AKT, ERK and NF-kappa-B. In addition, triggers increased bacterial adhesion and phagocytosis in macrophages and regulates pro-inflammatory function via enhancing NLRP3 inflammasome activation. Also plays an important role in inflammation by modulating neutrophil functions. Mechanistically, promotes neutrophil chemotaxis, reactive oxygen species (ROS) production and degranulation via LYN-AKT/ERK pathway. To regulate ROS, communicates with the two formyl peptide receptors FPR2 and FPR1 to control the NADPH oxidase activity in neutrophils. The polypeptide is G-protein coupled receptor 84 (GPR84) (Homo sapiens (Human)).